The primary structure comprises 176 residues: Small ribosomal subunit protein uS5 (176 aa).

The S5 DRBM domain occupies 15-78 (FEERIVEIRR…SAARRNVFEV (64 aa)).

The protein belongs to the universal ribosomal protein uS5 family. As to quaternary structure, part of the 30S ribosomal subunit. Contacts proteins S4 and S8.

Its function is as follows. With S4 and S12 plays an important role in translational accuracy. In terms of biological role, located at the back of the 30S subunit body where it stabilizes the conformation of the head with respect to the body. The protein is Small ribosomal subunit protein uS5 of Thermosipho africanus (strain TCF52B).